A 474-amino-acid chain; its full sequence is Glycogen synthase (474 aa).

Lys15 is a binding site for ADP-alpha-D-glucose.

It belongs to the glycosyltransferase 1 family. Bacterial/plant glycogen synthase subfamily.

It carries out the reaction [(1-&gt;4)-alpha-D-glucosyl](n) + ADP-alpha-D-glucose = [(1-&gt;4)-alpha-D-glucosyl](n+1) + ADP + H(+). It functions in the pathway glycan biosynthesis; glycogen biosynthesis. Synthesizes alpha-1,4-glucan chains using ADP-glucose. The chain is Glycogen synthase from Chlamydia muridarum (strain MoPn / Nigg).